Here is a 198-residue protein sequence, read N- to C-terminus: Putative pseudouridine methyltransferase (198 aa).

The S-adenosyl-L-methionine site is built by methionine 132 and cysteine 186.

This sequence belongs to the methyltransferase superfamily. TrmY family.

Its subcellular location is the cytoplasm. The protein is Putative pseudouridine methyltransferase of Shewanella baltica (strain OS185).